A 455-amino-acid polypeptide reads, in one-letter code: N-acetyl-S-(2-succino)cysteine lyase (455 aa).

106 to 107 (TT) serves as a coordination point for fumarate. Catalysis depends on H154, which acts as the Proton donor/acceptor. Position 233 (R233) interacts with fumarate. The active-site Proton donor/acceptor is S277. Residues S278 and 283 to 285 (KRN) each bind fumarate.

Belongs to the lyase 1 family.

It catalyses the reaction N-acetyl-S-(2-succino)-L-cysteine = N-acetyl-L-cysteine + fumarate. It functions in the pathway amino-acid biosynthesis; L-cysteine biosynthesis. In terms of biological role, catalyzes the cleavage of N-acetyl-S-(2-succino)cysteine into fumarate and N-acetylcysteine. Is involved in a S-(2-succino)cysteine (2SC) degradation pathway that allows the bacterium to recover cysteine from 2SC and to detoxify 2SC that may be a toxic metabolite. Can also perform the reverse reaction in vitro, and has minor activity against 2SC and other small molecule thiols. The protein is N-acetyl-S-(2-succino)cysteine lyase of Enterococcus italicus (strain DSM 15952 / CCUG 50447 / LMG 22039 / TP 1.5).